A 524-amino-acid polypeptide reads, in one-letter code: MMKSLLPQSQLRRSAAAASAARSSGGGAGSGGADGAGSDGGAGGRAPATSTFWFLLHALCCLVSLFLGFRFSRLLFFLLFSTTALYSSTSSSSSSAVLRATTTTTTTTTTTTTTTNTFTLSFQANPNPPPSNLSNHTALDAAGAAGHTQSHVVVGRHGIRIRPWPHPDPVEVMRAHRIMERVQEEQRRWYGVKEPRHVLVVTPTYSRAFQALHLTGLLHSLRNVPYPLTWIVVEAGGTTNATASLLARSDLTIVHIPFPDRMPHDWADRHATENRMRLHALRVIRERKMDGVIVFADDSNVHSLELFDEVQKVQWMGAVSVGILAHTGTADQPRLSEEDKQNMPLPVQGPACNSSGHLAGWHTFNSLPFAGKTATVVGEAAPVLPRGLEWAGFVLNSRILWKEAEGKPDWVKDLDAVGENGEEIENPLILLNDPSSVEPLGNCGKKILLWWLRVEARADSKFPQGWVIEPPLDIVVPAKRTPWPETTAELSAELVDSKQDQEGRRLSRTDRSSRSRSTTKRKEN.

The Cytoplasmic portion of the chain corresponds to 1 to 51 (MMKSLLPQSQLRRSAAAASAARSSGGGAGSGGADGAGSDGGAGGRAPATST). The segment at 21 to 41 (ARSSGGGAGSGGADGAGSDGG) is disordered. Residues 24–41 (SGGGAGSGGADGAGSDGG) are compositionally biased toward gly residues. A helical; Signal-anchor for type II membrane protein membrane pass occupies residues 52–71 (FWFLLHALCCLVSLFLGFRF). The Lumenal segment spans residues 72–524 (SRLLFFLLFS…SRSTTKRKEN (453 aa)). N-linked (GlcNAc...) asparagine glycosylation is found at Asn132, Asn135, Asn240, and Asn353. Residues 492-524 (AELVDSKQDQEGRRLSRTDRSSRSRSTTKRKEN) form a disordered region. The segment covering 495-513 (VDSKQDQEGRRLSRTDRSS) has biased composition (basic and acidic residues).

The protein belongs to the glycosyltransferase 43 family.

It localises to the golgi apparatus membrane. Its function is as follows. Probable beta-1,4-xylosyltransferase involved in xylan biosynthesis in cell walls. The chain is Probable beta-1,4-xylosyltransferase IRX14 from Oryza sativa subsp. japonica (Rice).